A 494-amino-acid polypeptide reads, in one-letter code: ATP synthase subunit beta, plastid (494 aa).

169–176 (GGAGVGKT) is an ATP binding site.

Belongs to the ATPase alpha/beta chains family. In terms of assembly, F-type ATPases have 2 components, CF(1) - the catalytic core - and CF(0) - the membrane proton channel. CF(1) has five subunits: alpha(3), beta(3), gamma(1), delta(1), epsilon(1). CF(0) has four main subunits: a(1), b(1), b'(1) and c(9-12).

Its subcellular location is the plastid thylakoid membrane. The catalysed reaction is ATP + H2O + 4 H(+)(in) = ADP + phosphate + 5 H(+)(out). In terms of biological role, produces ATP from ADP in the presence of a proton gradient across the membrane. The catalytic sites are hosted primarily by the beta subunits. The chain is ATP synthase subunit beta, plastid (atpB) from Cuscuta gronovii (Common dodder).